The following is a 198-amino-acid chain: E3 ubiquitin-protein ligase rnf152 (198 aa).

The RING-type zinc finger occupies 12–55 (CQICFNYFSQRRLPKLLHCQHTCCSVCLSQMRLSQREIRCPWCR). Residues 162–182 (TGVCTVLLVAFILIFLLGIVL) form a helical membrane-spanning segment.

The protein belongs to the RNF152 family.

The protein localises to the lysosome membrane. The enzyme catalyses S-ubiquitinyl-[E2 ubiquitin-conjugating enzyme]-L-cysteine + [acceptor protein]-L-lysine = [E2 ubiquitin-conjugating enzyme]-L-cysteine + N(6)-ubiquitinyl-[acceptor protein]-L-lysine.. The protein operates within protein modification; protein ubiquitination. Functionally, E3 ubiquitin-protein ligase that acts as a negative regulator of mTORC1 signaling by mediating ubiquitination of RagA/RRAGA and RHEB. Catalyzes 'Lys-63'-linked polyubiquitination of RagA/RRAGA in response to amino acid starvation, thereby regulating mTORC1 signaling. Also mediates monoubiquitination of RHEB, promoting its association with the TSC-TBC complex and subsequent inhibition. Also mediates 'Lys-48'-linked polyubiquitination of target proteins and their subsequent targeting to the proteasome for degradation. This Danio rerio (Zebrafish) protein is E3 ubiquitin-protein ligase rnf152.